The chain runs to 130 residues: Small ribosomal subunit protein uS9 (130 aa).

The protein belongs to the universal ribosomal protein uS9 family.

This chain is Small ribosomal subunit protein uS9, found in Janthinobacterium sp. (strain Marseille) (Minibacterium massiliensis).